Reading from the N-terminus, the 183-residue chain is Ubiquitin carboxyl-terminal hydrolase 17-like protein 23 (183 aa).

The USP domain maps to 80 to 183 (AGLQNMGNTC…KACLPGHKQV (104 aa)).

This sequence belongs to the peptidase C19 family. USP17 subfamily.

It is found in the nucleus. The protein localises to the endoplasmic reticulum. This Homo sapiens (Human) protein is Ubiquitin carboxyl-terminal hydrolase 17-like protein 23 (USP17L23).